Consider the following 911-residue polypeptide: Alpha-actinin-4 (911 aa).

The interval 1–269 (MVDYHAANQS…YVSSFYHAFS (269 aa)) is actin-binding. A disordered region spans residues 8–31 (NQSYQYGPSSGSNGAGGGGTMGDY). The interaction with VCL stretch occupies residues 12 to 26 (QYGPSSGSNGAGGGG). At Tyr31 the chain carries Phosphotyrosine. The tract at residues 40-61 (RDLLLDPAWEKQQRKTFTAWCN) is interaction with VCL. 2 Calponin-homology (CH) domains span residues 50 to 154 (KQQR…LRFA) and 163 to 269 (TSAK…HAFS). The LXXLL motif signature appears at 84-88 (LMLLL). Residues 108–126 (KINNVNKALDFIASKGVKL) are interaction with VCL. Lys114 is modified (N6-acetyllysine). The polyphosphoinositide (PIP2)-binding stretch occupies residues 177 to 192 (TAPYKNVNVQNFHISW). Lys214 bears the N6-acetyllysine mark. Thr249 is subject to Phosphothreonine. Spectrin repeat units lie at residues 293-403 (HLME…WLLN), 413-518 (HLAE…ALEK), 528-639 (QLHL…ALLE), and 649-752 (HLRR…EVEN). 2 positions are modified to N6-acetyllysine: Lys592 and Lys625. Ser696 is modified (phosphoserine). Positions 736–911 (WEQLLTTIAR…STALYGESDL (176 aa)) are mediates interaction with MICALL2. EF-hand domains are found at residues 765 to 800 (EQMQ…LGYD) and 806 to 841 (QGDA…ETTD). Asp778 lines the Ca(2+) pocket. The residue at position 779 (Lys779) is an N6-acetyllysine. Ca(2+)-binding residues include Asp780 and Glu789. Position 859 is an N6-acetyllysine (Lys859). Phosphoserine is present on Ser909.

The protein belongs to the alpha-actinin family. In terms of assembly, homodimer; antiparallel. Identified in a IGF2BP1-dependent mRNP granule complex containing untranslated mRNAs. Component of the CART complex, at least composed of ACTN4, HGS/HRS, MYO5B and TRIM3. Binds TRIM3 at the N-terminus. Interacts with MAGI1. Interacts with PDLIM2. Identified in a complex with CASK, IQGAP1, MAGI2, NPHS1, SPTAN1 and SPTBN1. Interacts with MICALL2 (preferentially in opened conformation); stimulated by RAB13 activation. Interacts with PPARG and RARA. Binds to VCL; this interaction triggers VCL conformational changes. Interacts with SEPTIN14. Interacts with IGSF8.

The protein localises to the nucleus. It localises to the cytoplasm. Its subcellular location is the cell junction. It is found in the cytoskeleton. The protein resides in the stress fiber. The protein localises to the perinuclear region. Its function is as follows. F-actin cross-linking protein which is thought to anchor actin to a variety of intracellular structures. This is a bundling protein. Probably involved in vesicular trafficking via its association with the CART complex. The CART complex is necessary for efficient transferrin receptor recycling but not for EGFR degradation. Involved in tight junction assembly in epithelial cells probably through interaction with MICALL2. Links MICALL2 to the actin cytoskeleton and recruits it to the tight junctions. May also function as a transcriptional coactivator, stimulating transcription mediated by the nuclear hormone receptors PPARG and RARA. Association with IGSF8 regulates the immune synapse formation and is required for efficient T-cell activation. The sequence is that of Alpha-actinin-4 from Bos taurus (Bovine).